Reading from the N-terminus, the 67-residue chain is Large ribosomal subunit protein bL35 (67 aa).

It belongs to the bacterial ribosomal protein bL35 family.

The protein is Large ribosomal subunit protein bL35 of Picosynechococcus sp. (strain ATCC 27264 / PCC 7002 / PR-6) (Agmenellum quadruplicatum).